The following is a 122-amino-acid chain: UPF0102 protein DIP1513 (122 aa).

This sequence belongs to the UPF0102 family.

The polypeptide is UPF0102 protein DIP1513 (Corynebacterium diphtheriae (strain ATCC 700971 / NCTC 13129 / Biotype gravis)).